The following is a 733-amino-acid chain: Hypermethylated in cancer 1 protein (733 aa).

Residues 47-110 (CDVIIVVQNA…IYTGRLTDSV (64 aa)) enclose the BTB domain. The interval 154–315 (KYCHLRGGGS…PFRGSGGSPG (162 aa)) is mediates HDAC-dependent transcriptional repression. Arg-159 carries the omega-N-methylarginine modification. Positions 189 to 209 (YSSPAGPPPPPAAEPPSGPDA) are disordered. Positions 193–206 (AGPPPPPAAEPPSG) are enriched in pro residues. Ser-237 bears the Phosphoserine mark. The interval 241–247 (GLDLSKK) is interaction with CTBP1. The disordered stretch occupies residues 241–421 (GLDLSKKSPP…PGGHLEGYPC (181 aa)). A Phosphoserine modification is found at Ser-248. Lys-333 is modified (N6-acetyllysine; alternate). A Glycyl lysine isopeptide (Lys-Gly) (interchain with G-Cter in SUMO); alternate cross-link involves residue Lys-333. A compositionally biased stretch (basic and acidic residues) spans 344-361 (ELVRDRGSPGERLEERGG). Ser-366 is subject to Phosphoserine. Pro residues predominate over residues 368–380 (GGPPLGLVPPPRY). 5 C2H2-type zinc fingers span residues 437–464 (YVCI…EEEE), 507–534 (YRCA…LTRP), 535–562 (YPCT…GLKP), 563–590 (FACD…GEKP), and 591–618 (YECQ…VGGA). Position 704 is a phosphoserine (Ser-704).

This sequence belongs to the krueppel C2H2-type zinc-finger protein family. Hic subfamily. In terms of assembly, self-associates. Interacts with HIC2. Interacts with CTBP1 and CTBP2. Interacts with TCF7L2 and ARID1A. Interacts with MTA1 and MBD3; indicative for an association with the NuRD complex. Interacts with SIRT1. Post-translationally, acetylated on several residues, including Lys-333. Lys-333 is deacetylated by SIRT1. In terms of processing, sumoylated on Lys-333 by a PIAS family member, which enhances interaction with MTA1, positively regulates transcriptional repression activity and is enhanced by HDAC4. Ubiquitously expressed with highest levels in heart and lung.

It localises to the nucleus. Its function is as follows. Transcriptional repressor. Recognizes and binds to the consensus sequence '5-[CG]NG[CG]GGGCA[CA]CC-3'. May act as a tumor suppressor. Involved in development of head, face, limbs and ventral body wall. Involved in down-regulation of SIRT1 and thereby is involved in regulation of p53/TP53-dependent apoptotic DNA-damage responses. The specific target gene promoter association seems to be depend on corepressors, such as CTBP1 or CTBP2 and MTA1. In cooperation with MTA1 (indicative for an association with the NuRD complex) represses transcription from CCND1/cyclin-D1 and CDKN1C/p57Kip2 specifically in quiescent cells. Involved in regulation of the Wnt signaling pathway probably by association with TCF7L2 and preventing TCF7L2 and CTNNB1 association with promoters of TCF-responsive genes. Seems to repress transcription from E2F1 and ATOH1 which involves ARID1A, indicative for the participation of a distinct SWI/SNF-type chromatin-remodeling complex. Probably represses transcription from ACKR3, FGFBP1 and EFNA1. This chain is Hypermethylated in cancer 1 protein (Hic1), found in Mus musculus (Mouse).